Reading from the N-terminus, the 85-residue chain is UPF0297 protein Cbei_1105 (85 aa).

This sequence belongs to the UPF0297 family.

This is UPF0297 protein Cbei_1105 from Clostridium beijerinckii (strain ATCC 51743 / NCIMB 8052) (Clostridium acetobutylicum).